The primary structure comprises 164 residues: Envelope glycoprotein L (164 aa).

An N-terminal signal peptide occupies residues 1-24 (MRSLDRYAIFILLACGLLWRPCLS).

This sequence belongs to the herpesviridae glycoprotein L family. Interacts with glycoprotein H (gH); this interaction is necessary for the correct processing and cell surface expression of gH. The heterodimer gH/gL seems to interact with gB trimers during fusion.

Its subcellular location is the virion membrane. The protein resides in the host cell membrane. It localises to the host Golgi apparatus. It is found in the host trans-Golgi network. Its function is as follows. The heterodimer glycoprotein H-glycoprotein L is required for the fusion of viral and plasma membranes leading to virus entry into the host cell. Acts as a functional inhibitor of gH and maintains gH in an inhibited form. Upon binding to host integrins, gL dissociates from gH leading to activation of the viral fusion glycoproteins gB and gH. The protein is Envelope glycoprotein L of Equine herpesvirus 2 (strain 86/87) (EHV-2).